The following is a 199-amino-acid chain: Ras-related and estrogen-regulated growth inhibitor (199 aa).

GTP is bound by residues Gly13–Ser20, Asp60–Gln64, and Asn118–Asp121.

Belongs to the small GTPase superfamily. Ras family. As to expression, detected in heart, brain, placenta, lung, liver, skin, kidney and pancreas. Detected in estrogen receptor-positive breast-derived cell lines, but not in estrogen receptor-negative cell lines. Expression is decreased or lost in a significant proportion of primary breast tumors with poor clinical prognosis.

The protein localises to the cytoplasm. The enzyme catalyses GTP + H2O = GDP + phosphate + H(+). In terms of biological role, binds GDP/GTP and possesses intrinsic GTPase activity. Has higher affinity for GDP than for GTP. In cell lines overexpression leads to a reduction in the rate of proliferation, colony formation and in tumorigenic potential. This is Ras-related and estrogen-regulated growth inhibitor (RERG) from Homo sapiens (Human).